The sequence spans 500 residues: ADP,ATP carrier protein 5 (500 aa).

11 helical membrane-spanning segments follow: residues 26–46 (LGKF…QNIL), 62–82 (IAGF…VIIY), 94–114 (IFYY…FVIY), 149–169 (YIVY…LLFW), 184–204 (FYTL…FLMM), 224–244 (ITLV…CCLL), 287–307 (LWLL…VEAV), 328–348 (LYIL…NNVM), 357–377 (AVIS…LIVF), 381–401 (ILSL…VSIG), and 469–489 (SISP…IYAV).

This sequence belongs to the ADP/ATP translocase tlc family.

The protein localises to the cell membrane. Its function is as follows. Provides the rickettsial cell with host ATP in exchange for rickettsial ADP. This is an obligate exchange system. This energy acquiring activity is an important component of rickettsial parasitism. In Rickettsia typhi (strain ATCC VR-144 / Wilmington), this protein is ADP,ATP carrier protein 5 (tlcE).